An 86-amino-acid chain; its full sequence is MISNEAFVLGCSAIGAGLAMIAGIGPGIGQGIAAGHGAAAVGRNPGARGNIMSTMLLGQAVAETTGLYGFAVAIILLFANPLLGKL.

2 helical membrane-spanning segments follow: residues 8–28 and 64–84; these read VLGC…GPGI and TTGL…PLLG.

It belongs to the ATPase C chain family. As to quaternary structure, F-type ATPases have 2 components, F(1) - the catalytic core - and F(0) - the membrane proton channel. F(1) has five subunits: alpha(3), beta(3), gamma(1), delta(1), epsilon(1). F(0) has three main subunits: a(1), b(2) and c(10-14). The alpha and beta chains form an alternating ring which encloses part of the gamma chain. F(1) is attached to F(0) by a central stalk formed by the gamma and epsilon chains, while a peripheral stalk is formed by the delta and b chains.

It localises to the cell membrane. F(1)F(0) ATP synthase produces ATP from ADP in the presence of a proton or sodium gradient. F-type ATPases consist of two structural domains, F(1) containing the extramembraneous catalytic core and F(0) containing the membrane proton channel, linked together by a central stalk and a peripheral stalk. During catalysis, ATP synthesis in the catalytic domain of F(1) is coupled via a rotary mechanism of the central stalk subunits to proton translocation. In terms of biological role, key component of the F(0) channel; it plays a direct role in translocation across the membrane. A homomeric c-ring of between 10-14 subunits forms the central stalk rotor element with the F(1) delta and epsilon subunits. This Lachnoclostridium phytofermentans (strain ATCC 700394 / DSM 18823 / ISDg) (Clostridium phytofermentans) protein is ATP synthase subunit c.